Consider the following 796-residue polypeptide: High affinity nerve growth factor receptor (796 aa).

The first 32 residues, 1 to 32 (MLRGGRRGQLGWHSWAAGPGSLLAWLILASAG), serve as a signal peptide directing secretion. Residues 33-423 (AAPCPDACCP…TPFGVSVAVG (391 aa)) are Extracellular-facing. 2 disulfide bridges follow: cysteine 36/cysteine 41 and cysteine 40/cysteine 50. N-linked (GlcNAc...) asparagine glycosylation is found at asparagine 67, asparagine 95, asparagine 121, asparagine 188, asparagine 202, asparagine 253, asparagine 262, asparagine 281, asparagine 318, asparagine 323, asparagine 338, asparagine 358, and asparagine 401. LRR repeat units lie at residues 90–113 (LGEL…AFHF) and 116–137 (RLSR…TVQG). In terms of domain architecture, LRRCT spans 148-193 (NPLHCSCALRWLQRWEEEGLGGVPEQKLQCHGQGPLAHMPNASCGV). A disulfide bridge connects residues cysteine 154 and cysteine 191. Ig-like C2-type domains follow at residues 194 to 283 (PTLK…VNVS) and 299 to 365 (WCIP…LAAN). A disulfide bridge links cysteine 215 with cysteine 265. A disulfide bridge connects residues cysteine 300 and cysteine 345. A helical transmembrane segment spans residues 424–439 (LAVFACLFLSTLLLVL). Over 440 to 796 (NKCGRRNKFG…APPVYLDVLG (357 aa)) the chain is Cytoplasmic. The segment at 469–490 (MTLGGSSLSPTEGKGSGLQGHI) is interaction with SQSTM1. Tyrosine 496 is subject to Phosphotyrosine; by autocatalysis. The region spanning 510 to 781 (IVLKWELGEG…HSIKDVHARL (272 aa)) is the Protein kinase domain. Position 516 to 524 (516 to 524 (LGEGAFGKV)) interacts with ATP. The DXXLL motif lies at 537-541 (DKMLV). Lysine 544 lines the ATP pocket. The short motif at 607 to 611 (DAKLL) is the DXXLL element. Catalysis depends on aspartate 650, which acts as the Proton acceptor. Phosphotyrosine; by autocatalysis occurs at positions 676, 680, 681, and 791.

The protein belongs to the protein kinase superfamily. Tyr protein kinase family. Insulin receptor subfamily. Exists in a dynamic equilibrium between monomeric (low affinity) and dimeric (high affinity) structures. Homodimerization is induced by binding of a NGF dimer. Interacts with SQSTM1; bridges NTRK1 to NGFR. Forms a ternary complex with NGFR and KIDINS220; this complex is affected by the expression levels of KIDINS220 and an increase in KIDINS220 expression leads to a decreased association of NGFR and NTRK1. Interacts with SH2D1A; regulates NTRK1. Interacts (phosphorylated upon activation by NGF) with SHC1; mediates SHC1 phosphorylation and activation. Interacts (phosphorylated upon activation by NGF) with PLCG1; mediates PLCG1 phosphorylation and activation. Interacts (phosphorylated) with SH2B1 and SH2B2. Interacts with GRB2. Interacts with PIK3R1. Interacts with FRS2. Interacts with SORT1; may regulate NTRK1 anterograde axonal transport. Interacts with RAB7A. Found in a complex, at least composed of KIDINS220, MAGI2, NTRK1 and RAPGEF2; the complex is mainly formed at late endosomes in a nerve growth factor (NGF)-dependent manner. Interacts with RAPGEF2; the interaction is strengthened after NGF stimulation. Interacts with PTPRS. Interacts with USP36; USP36 does not deubiquitinate NTRK1. Interacts with GGA3. Interacts with TSPAN1; this interaction promotes NTRK1 stability. In terms of processing, ligand-mediated autophosphorylation. Interaction with SQSTM1 is phosphotyrosine-dependent. Autophosphorylation at Tyr-496 mediates interaction and phosphorylation of SHC1. Post-translationally, N-glycosylated. Isoform TrkA-I and isoform TrkA-II are N-glycosylated. Ubiquitinated. Undergoes polyubiquitination upon activation; regulated by NGFR. Ubiquitination by NEDD4L leads to degradation. Ubiquitination regulates the internalization of the receptor. Isoform TrkA-I is found in most non-neuronal tissues. Isoform TrkA-II is primarily expressed in neuronal cells. TrkA-III is specifically expressed by pluripotent neural stem and neural crest progenitors.

Its subcellular location is the cell membrane. It localises to the early endosome membrane. The protein resides in the late endosome membrane. It is found in the recycling endosome membrane. It catalyses the reaction L-tyrosyl-[protein] + ATP = O-phospho-L-tyrosyl-[protein] + ADP + H(+). With respect to regulation, the pro-survival signaling effect of NTRK1 in neurons requires its endocytosis into signaling early endosomes and its retrograde axonal transport. This is regulated by different proteins including CFL1, RAC1 and SORT1. NTF3 is unable to induce this signaling probably due to the lability of the NTF3-NTRK1 complex in endosomes. SH2D1A inhibits the autophosphorylation of the receptor, and alters the recruitment and activation of downstream effectors and signaling cascades. Regulated by NGFR. Functionally, receptor tyrosine kinase involved in the development and the maturation of the central and peripheral nervous systems through regulation of proliferation, differentiation and survival of sympathetic and nervous neurons. High affinity receptor for NGF which is its primary ligand. Can also bind and be activated by NTF3/neurotrophin-3. However, NTF3 only supports axonal extension through NTRK1 but has no effect on neuron survival. Upon dimeric NGF ligand-binding, undergoes homodimerization, autophosphorylation and activation. Recruits, phosphorylates and/or activates several downstream effectors including SHC1, FRS2, SH2B1, SH2B2 and PLCG1 that regulate distinct overlapping signaling cascades driving cell survival and differentiation. Through SHC1 and FRS2 activates a GRB2-Ras-MAPK cascade that regulates cell differentiation and survival. Through PLCG1 controls NF-Kappa-B activation and the transcription of genes involved in cell survival. Through SHC1 and SH2B1 controls a Ras-PI3 kinase-AKT1 signaling cascade that is also regulating survival. In absence of ligand and activation, may promote cell death, making the survival of neurons dependent on trophic factors. Resistant to NGF, it constitutively activates AKT1 and NF-kappa-B and is unable to activate the Ras-MAPK signaling cascade. Antagonizes the anti-proliferative NGF-NTRK1 signaling that promotes neuronal precursors differentiation. Isoform TrkA-III promotes angiogenesis and has oncogenic activity when overexpressed. In Homo sapiens (Human), this protein is High affinity nerve growth factor receptor (NTRK1).